Consider the following 225-residue polypeptide: Insulin-induced gene 2 protein (225 aa).

Over 1–28 (MAEGETESPGPKKCGPYISSVTSQSVNL) the chain is Cytoplasmic. Residues 29 to 51 (MIRGVVLFFIGVFLALVLNLLQI) traverse the membrane as a helical segment. Topologically, residues 52-70 (QRNVTLFPPDVIASIFSSA) are lumenal. Residues 71–88 (WWVPPCCGTASAVIGLLY) traverse the membrane as a helical segment. The Cytoplasmic segment spans residues 89 to 103 (PCIDRHLGEPHKFKR). A helical transmembrane segment spans residues 104–126 (EWSSVMRCVAVFVGINHASAKVD). Residues 127–129 (FDN) lie on the Lumenal side of the membrane. Residues 130–148 (NIQLSLTLAALSIGLWWTF) form a helical membrane-spanning segment. Topologically, residues 149-153 (DRSRS) are cytoplasmic. S151 carries the post-translational modification Phosphoserine; by PCK1. The helical transmembrane segment at 154-175 (GFGLGVGIAFLATVVTQLLVYN) threads the bilayer. Over 176-189 (GVYQYTSPDFLYVR) the chain is Lumenal. Residues 190–207 (SWLPCIFFAGGITMGNIG) form a helical membrane-spanning segment. The Cytoplasmic segment spans residues 208-225 (RQLAMYECKVIAEKSHQE). C215 bears the Cysteine sulfenic acid (-SOH); alternate mark. Residue C215 forms a Glycyl cysteine thioester (Cys-Gly) (interchain with G-Cter in ubiquitin); alternate linkage. Residues 219–225 (AEKSHQE) carry the KxHxx motif.

It belongs to the INSIG family. Interacts with SCAP; interaction is direct and only takes place in the presence of sterols; it prevents interaction between SCAP and the coat protein complex II (COPII). Associates with the SCAP-SREBP complex (composed of SCAP and SREBF1/SREBP1 or SREBF2/SREBP2); association is mediated via its interaction with SCAP and only takes place in the presence of sterols. Interacts with RNF139. Interacts with RNF145. In terms of processing, phosphorylation at Ser-151 by PCK1 reduces binding to oxysterol, disrupting the interaction between INSIG2 and SCAP, thereby promoting nuclear translocation of SREBP proteins (SREBF1/SREBP1 or SREBF2/SREBP2) and subsequent transcription of downstream lipogenesis-related genes. Post-translationally, polyubiquitinated by AMFR/gp78 at Cys-215 in some tissues such as adipose tissues, undifferentiated myoblasts and liver, leading to its degradation. In differentiated myotubes, Cys-215 oxidation prevents ubiquitination at the same site, resulting in protein stabilization. Oxidized at Cys-215 in differentiated myotubes, preventing ubiquitination at the same site, and resulting in protein stabilization.

Its subcellular location is the endoplasmic reticulum membrane. In terms of biological role, oxysterol-binding protein that mediates feedback control of cholesterol synthesis by controlling both endoplasmic reticulum to Golgi transport of SCAP and degradation of HMGCR. Acts as a negative regulator of cholesterol biosynthesis by mediating the retention of the SCAP-SREBP complex in the endoplasmic reticulum, thereby blocking the processing of sterol regulatory element-binding proteins (SREBPs) SREBF1/SREBP1 and SREBF2/SREBP2. Binds oxysterol, including 22-hydroxycholesterol, 24-hydroxycholesterol, 25-hydroxycholesterol and 27-hydroxycholesterol, regulating interaction with SCAP and retention of the SCAP-SREBP complex in the endoplasmic reticulum. In presence of oxysterol, interacts with SCAP, retaining the SCAP-SREBP complex in the endoplasmic reticulum, thereby preventing SCAP from escorting SREBF1/SREBP1 and SREBF2/SREBP2 to the Golgi. Sterol deprivation or phosphorylation by PCK1 reduce oxysterol-binding, disrupting the interaction between INSIG2 and SCAP, thereby promoting Golgi transport of the SCAP-SREBP complex, followed by processing and nuclear translocation of SREBF1/SREBP1 and SREBF2/SREBP2. Also regulates cholesterol synthesis by regulating degradation of HMGCR: initiates the sterol-mediated ubiquitin-mediated endoplasmic reticulum-associated degradation (ERAD) of HMGCR via recruitment of the reductase to the ubiquitin ligase RNF139. The protein is Insulin-induced gene 2 protein of Homo sapiens (Human).